We begin with the raw amino-acid sequence, 364 residues long: tRNA-specific 2-thiouridylase MnmA 1 (364 aa).

Residues 10–17 (GMSGGVDS) and Met36 each bind ATP. Cys106 (nucleophile) is an active-site residue. The cysteines at positions 106 and 204 are disulfide-linked. ATP is bound at residue Gly130. Residues 154-156 (KDQ) form an interaction with tRNA region. The active-site Cysteine persulfide intermediate is the Cys204. The interaction with tRNA stretch occupies residues 310-311 (RY).

This sequence belongs to the MnmA/TRMU family.

It localises to the cytoplasm. The catalysed reaction is S-sulfanyl-L-cysteinyl-[protein] + uridine(34) in tRNA + AH2 + ATP = 2-thiouridine(34) in tRNA + L-cysteinyl-[protein] + A + AMP + diphosphate + H(+). Catalyzes the 2-thiolation of uridine at the wobble position (U34) of tRNA, leading to the formation of s(2)U34. This Caldanaerobacter subterraneus subsp. tengcongensis (strain DSM 15242 / JCM 11007 / NBRC 100824 / MB4) (Thermoanaerobacter tengcongensis) protein is tRNA-specific 2-thiouridylase MnmA 1.